The chain runs to 249 residues: Phosphate import ATP-binding protein PstB 2 (249 aa).

One can recognise an ABC transporter domain in the interval 4 to 244 (FEVTHLNLFY…PKDHRTQGYV (241 aa)). 36–43 (GPSGCGKS) contacts ATP.

It belongs to the ABC transporter superfamily. Phosphate importer (TC 3.A.1.7) family. As to quaternary structure, the complex is composed of two ATP-binding proteins (PstB), two transmembrane proteins (PstC and PstA) and a solute-binding protein (PstS).

It is found in the cell inner membrane. The enzyme catalyses phosphate(out) + ATP + H2O = ADP + 2 phosphate(in) + H(+). In terms of biological role, part of the ABC transporter complex PstSACB involved in phosphate import. Responsible for energy coupling to the transport system. The sequence is that of Phosphate import ATP-binding protein PstB 2 from Shewanella oneidensis (strain ATCC 700550 / JCM 31522 / CIP 106686 / LMG 19005 / NCIMB 14063 / MR-1).